Here is a 354-residue protein sequence, read N- to C-terminus: Serum paraoxonase/arylesterase 2 (354 aa).

The cysteines at positions 42 and 352 are disulfide-linked. 2 residues coordinate Ca(2+): E53 and D54. Residue H114 is the Proton acceptor of the active site. I116, N167, D168, and N223 together coordinate Ca(2+). An N-linked (GlcNAc...) asparagine glycan is attached at N254. Residues D268 and N269 each coordinate Ca(2+). N269 and N323 each carry an N-linked (GlcNAc...) asparagine glycan.

Belongs to the paraoxonase family. Homotrimer. It depends on Ca(2+) as a cofactor. In terms of processing, glycosylated. The signal sequence is not cleaved.

Its subcellular location is the membrane. The enzyme catalyses a phenyl acetate + H2O = a phenol + acetate + H(+). The catalysed reaction is an N-acyl-L-homoserine lactone + H2O = an N-acyl-L-homoserine + H(+). Functionally, capable of hydrolyzing lactones and a number of aromatic carboxylic acid esters. This Rattus norvegicus (Rat) protein is Serum paraoxonase/arylesterase 2 (Pon2).